We begin with the raw amino-acid sequence, 331 residues long: HTH-type transcriptional regulator GntR (331 aa).

One can recognise an HTH lacI-type domain in the interval 6–60 (PVLQDVADRVGVTKMTVSRFLRNPEQVSVALRGKIAAALDELGYIPNRAPDILSN). Residues 8 to 27 (LQDVADRVGVTKMTVSRFLR) constitute a DNA-binding region (H-T-H motif).

Its pathway is carbohydrate acid metabolism; D-gluconate degradation [regulation]. In terms of biological role, negative regulator for the gluconate utilization system GNT-I, the gntUKR operon. The polypeptide is HTH-type transcriptional regulator GntR (gntR) (Escherichia coli O6:H1 (strain CFT073 / ATCC 700928 / UPEC)).